Here is a 271-residue protein sequence, read N- to C-terminus: Transmembrane protein 33 homolog (271 aa).

Positions 1 to 32 (MVEIVEEPDDHQSSSTGAGSSGSSSAPPPPPP) are disordered. Positions 13-25 (SSSTGAGSSGSSS) are enriched in low complexity. A run of 3 helical transmembrane segments spans residues 56-76 (VLTVFFALNYMIPFIGLVPAH), 125-145 (VVFLMAAPVSMAALPVTIYAA), and 180-200 (ALGIIACSEIFLVPLLVSLIF).

It belongs to the PER33/POM33 family.

Its subcellular location is the membrane. This Caenorhabditis elegans protein is Transmembrane protein 33 homolog.